A 291-amino-acid chain; its full sequence is Elongation factor Ts (291 aa).

Positions 79 to 82 are involved in Mg(2+) ion dislocation from EF-Tu; sequence TDFV.

Belongs to the EF-Ts family.

Its subcellular location is the cytoplasm. In terms of biological role, associates with the EF-Tu.GDP complex and induces the exchange of GDP to GTP. It remains bound to the aminoacyl-tRNA.EF-Tu.GTP complex up to the GTP hydrolysis stage on the ribosome. The polypeptide is Elongation factor Ts (Anaplasma marginale (strain Florida)).